Here is a 435-residue protein sequence, read N- to C-terminus: Protoheme IX farnesyltransferase, mitochondrial (435 aa).

The N-terminal 35 residues, 1–35 (MPALCATYLIHSGNLRACLRIVPLTKPSVVIAYRH), are a transit peptide targeting the mitochondrion. 6 consecutive transmembrane segments (helical) span residues 135 to 155 (VLVM…ATVL), 157 to 177 (LLSL…INMG), 212 to 232 (GVIG…LLGA), 250 to 270 (IINT…GWAA), 324 to 344 (VALR…YYGI), and 401 to 421 (FWVS…HKKG).

It belongs to the UbiA prenyltransferase family.

It is found in the mitochondrion membrane. In terms of biological role, converts protoheme IX and farnesyl diphosphate to heme O. The protein is Protoheme IX farnesyltransferase, mitochondrial (COX10) of Eremothecium gossypii (strain ATCC 10895 / CBS 109.51 / FGSC 9923 / NRRL Y-1056) (Yeast).